Reading from the N-terminus, the 170-residue chain is Putative 4-hydroxy-4-methyl-2-oxoglutarate aldolase (170 aa).

Substrate-binding positions include 85–88 (GDMI) and R107. Position 108 (D108) interacts with a divalent metal cation.

The protein belongs to the class II aldolase/RraA-like family. As to quaternary structure, homotrimer. It depends on a divalent metal cation as a cofactor.

It catalyses the reaction 4-hydroxy-4-methyl-2-oxoglutarate = 2 pyruvate. The enzyme catalyses oxaloacetate + H(+) = pyruvate + CO2. In terms of biological role, catalyzes the aldol cleavage of 4-hydroxy-4-methyl-2-oxoglutarate (HMG) into 2 molecules of pyruvate. Also contains a secondary oxaloacetate (OAA) decarboxylase activity due to the common pyruvate enolate transition state formed following C-C bond cleavage in the retro-aldol and decarboxylation reactions. This chain is Putative 4-hydroxy-4-methyl-2-oxoglutarate aldolase, found in Acinetobacter baylyi (strain ATCC 33305 / BD413 / ADP1).